We begin with the raw amino-acid sequence, 496 residues long: Geranylhydroquinone 3''-hydroxylase CYP76B74 (496 aa).

A helical transmembrane segment spans residues 3–23; sequence YTTILVGFLIGFVLFKALTRK. Cys436 serves as a coordination point for heme.

The protein belongs to the cytochrome P450 family. Heme is required as a cofactor.

It is found in the endoplasmic reticulum membrane. It catalyses the reaction (2E)-geranylhydroquinone + reduced [NADPH--hemoprotein reductase] + O2 = (2Z)-3''-hydroxygeranylhydroquinone + oxidized [NADPH--hemoprotein reductase] + H2O + H(+). Hydroxylase involved in the biosynthesis pathway of the red naphthoquinone pigment shikonin. Catalyzes the key step C-3''-hydroxylation of the prenylated phenolic intermediate geranylhydroquinone to form 3''-hydroxygeranylhydroquinone. The protein is Geranylhydroquinone 3''-hydroxylase CYP76B74 of Arnebia euchroma (Pink arnebia).